Consider the following 397-residue polypeptide: Cephalotocin receptor 1 (397 aa).

Topologically, residues 1–48 are extracellular; it reads MRYITTHPNEISTQIWNNFSSTEIWSNFSAAKNETQPIRRNQDLANAE. 3 N-linked (GlcNAc...) asparagine glycosylation sites follow: Asn-18, Asn-27, and Asn-33. Residues 49–69 form a helical membrane-spanning segment; it reads VITLAVVIIITVIGNSIVLIT. Residues 70-91 are Cytoplasmic-facing; that stretch reads LFQRRKKLTRMHLFILHLSVTD. The chain crosses the membrane as a helical span at residues 92–112; it reads LFVAFFNNLPQMIWDITFLFL. The Extracellular segment spans residues 113–120; it reads GTDLLCRL. A disulfide bond links Cys-118 and Cys-194. A helical transmembrane segment spans residues 121 to 141; that stretch reads VTYLQSVAMYASSYVLVATAI. The Cytoplasmic portion of the chain corresponds to 142-162; that stretch reads DRYFAICHPLSSHKWTTARVH. The helical transmembrane segment at 163–183 threads the bilayer; that stretch reads VMVFIAWMLSFLFSTPQLFIW. Over 184–205 the chain is Extracellular; the sequence is SMQFSNIGLTCQATFDPEWTLK. Residues 206–226 form a helical membrane-spanning segment; that stretch reads FYITWLTVAIWILPTIALTLF. At 227–293 the chain is on the cytoplasmic side; the sequence is YGMMCFAVWK…RGISRAKVRS (67 aa). The helical transmembrane segment at 294-314 threads the bilayer; sequence VALTLSVVACCFICWSPFFVC. Topologically, residues 315–331 are extracellular; sequence QMWAAWDENAPYSGAIY. A helical transmembrane segment spans residues 332 to 352; that stretch reads TILLLLSSLNSCTNPWIYMIF. Residues 353 to 397 lie on the Cytoplasmic side of the membrane; that stretch reads SVFQHRAKTSRFVNDEETTSVTVLSSRNDIRLMSMKKKLEQTARN.

This sequence belongs to the G-protein coupled receptor 1 family. Vasopressin/oxytocin receptor subfamily. In terms of tissue distribution, present in brain, buccal ganglion, gastric ganglion, olfactory lube, peduncle lobe, optical lobe, pancreas, the oviduct and the ovary.

The protein resides in the cell membrane. In terms of biological role, acts as a receptor for cephalotocin. This chain is Cephalotocin receptor 1, found in Octopus vulgaris (Common octopus).